The following is a 291-amino-acid chain: Protease HtpX homolog (291 aa).

The next 2 membrane-spanning stretches (helical) occupy residues 4 to 24 and 39 to 59; these read IVLF…TMRL and TSLL…SLAI. Position 145 (histidine 145) interacts with Zn(2+). Glutamate 146 is an active-site residue. Residue histidine 149 coordinates Zn(2+). 2 consecutive transmembrane segments (helical) span residues 156-176 and 195-215; these read VTLA…SRII and FFVT…IIVM. Residue glutamate 222 coordinates Zn(2+).

It belongs to the peptidase M48B family. It depends on Zn(2+) as a cofactor.

It is found in the cell inner membrane. This chain is Protease HtpX homolog, found in Thiobacillus denitrificans (strain ATCC 25259 / T1).